Reading from the N-terminus, the 169-residue chain is Transcription antitermination protein NusB (169 aa).

The interval 1–23 (MADSKKPAIKKPVPKGDRKANRR) is disordered.

Belongs to the NusB family.

Functionally, involved in transcription antitermination. Required for transcription of ribosomal RNA (rRNA) genes. Binds specifically to the boxA antiterminator sequence of the ribosomal RNA (rrn) operons. In Rhodopseudomonas palustris (strain HaA2), this protein is Transcription antitermination protein NusB.